A 366-amino-acid chain; its full sequence is Aminomethyltransferase (366 aa).

It belongs to the GcvT family. In terms of assembly, the glycine cleavage system is composed of four proteins: P, T, L and H.

The catalysed reaction is N(6)-[(R)-S(8)-aminomethyldihydrolipoyl]-L-lysyl-[protein] + (6S)-5,6,7,8-tetrahydrofolate = N(6)-[(R)-dihydrolipoyl]-L-lysyl-[protein] + (6R)-5,10-methylene-5,6,7,8-tetrahydrofolate + NH4(+). In terms of biological role, the glycine cleavage system catalyzes the degradation of glycine. In Bacillus cereus (strain G9842), this protein is Aminomethyltransferase.